The primary structure comprises 359 residues: Membrane-bound lytic murein transglycosylase C (359 aa).

A signal peptide spans methionine 1 to serine 16. Residue cysteine 17 is the site of N-palmitoyl cysteine attachment. A lipid anchor (S-diacylglycerol cysteine) is attached at cysteine 17.

This sequence belongs to the transglycosylase Slt family.

The protein resides in the cell outer membrane. It carries out the reaction Exolytic cleavage of the (1-&gt;4)-beta-glycosidic linkage between N-acetylmuramic acid (MurNAc) and N-acetylglucosamine (GlcNAc) residues in peptidoglycan, from either the reducing or the non-reducing ends of the peptidoglycan chains, with concomitant formation of a 1,6-anhydrobond in the MurNAc residue.. Murein-degrading enzyme. May play a role in recycling of muropeptides during cell elongation and/or cell division. The sequence is that of Membrane-bound lytic murein transglycosylase C from Escherichia fergusonii (strain ATCC 35469 / DSM 13698 / CCUG 18766 / IAM 14443 / JCM 21226 / LMG 7866 / NBRC 102419 / NCTC 12128 / CDC 0568-73).